Here is a 215-residue protein sequence, read N- to C-terminus: Kunitz trypsin inhibitor 4 (215 aa).

The first 28 residues, 1-28, serve as a signal peptide directing secretion; the sequence is MTKTTKTMNPKFYLVLALTAVLASNAYG. Cystine bridges form between cysteine 66–cysteine 112 and cysteine 165–cysteine 176. A glycan (N-linked (GlcNAc...) asparagine) is linked at asparagine 206.

This sequence belongs to the protease inhibitor I3 (leguminous Kunitz-type inhibitor) family. As to expression, expressed in roots.

It localises to the endoplasmic reticulum. Its function is as follows. Exhibits Kunitz trypsin protease inhibitor activity. Involved in modulating programmed cell death (PCD) in plant-pathogen interactions. Can inhibit both serine proteases and cysteine proteases. May be involved in the modulation of the proteases that participate in the hydrolysis of dietary proteins in the gut of spider mites. The chain is Kunitz trypsin inhibitor 4 from Arabidopsis thaliana (Mouse-ear cress).